The primary structure comprises 252 residues: Imidazole glycerol phosphate synthase subunit HisF (252 aa).

Catalysis depends on residues D11 and D130.

Belongs to the HisA/HisF family. Heterodimer of HisH and HisF.

Its subcellular location is the cytoplasm. The enzyme catalyses 5-[(5-phospho-1-deoxy-D-ribulos-1-ylimino)methylamino]-1-(5-phospho-beta-D-ribosyl)imidazole-4-carboxamide + L-glutamine = D-erythro-1-(imidazol-4-yl)glycerol 3-phosphate + 5-amino-1-(5-phospho-beta-D-ribosyl)imidazole-4-carboxamide + L-glutamate + H(+). It functions in the pathway amino-acid biosynthesis; L-histidine biosynthesis; L-histidine from 5-phospho-alpha-D-ribose 1-diphosphate: step 5/9. In terms of biological role, IGPS catalyzes the conversion of PRFAR and glutamine to IGP, AICAR and glutamate. The HisF subunit catalyzes the cyclization activity that produces IGP and AICAR from PRFAR using the ammonia provided by the HisH subunit. This is Imidazole glycerol phosphate synthase subunit HisF from Staphylococcus epidermidis (strain ATCC 35984 / DSM 28319 / BCRC 17069 / CCUG 31568 / BM 3577 / RP62A).